The following is a 42-amino-acid chain: Crotamine-IV-3 (42 aa).

Intrachain disulfides connect Cys-4/Cys-37, Cys-11/Cys-31, and Cys-19/Cys-38.

The protein belongs to the crotamine-myotoxin family. In terms of assembly, monomer. In terms of tissue distribution, expressed by the venom gland.

The protein resides in the secreted. Its function is as follows. Cationic peptide that possesses multiple functions. It acts as a cell-penetrating peptide (CPP), and as a potent voltage-gated potassium channel (Kv) inhibitor. It exhibits antimicrobial activities, and hind limb paralysis. It also induces potent blockade of neuromuscular transmission in young chicken biventer cervicis preparation and potent myotoxic effect. In mice, it induces myonecrosis, upon intramuscular or subcutaneous injections. This chain is Crotamine-IV-3, found in Crotalus durissus cumanensis (South American rattlesnake).